The primary structure comprises 183 residues: Adenylate kinase (183 aa).

12-17 (GAGKGT) contributes to the ATP binding site. The segment at 32 to 61 (STGDLLRSEVSAGSALGQEAEAVMNRGELV) is NMP. AMP contacts are provided by residues threonine 33, arginine 38, 59–61 (ELV), 86–89 (GFPR), and glutamine 93. The interval 127-133 (ARGRADD) is LID. Arginine 128 is an ATP binding site. AMP-binding residues include arginine 130 and arginine 141. Residue glycine 169 participates in ATP binding.

Belongs to the adenylate kinase family. In terms of assembly, monomer.

The protein localises to the cytoplasm. It catalyses the reaction AMP + ATP = 2 ADP. The protein operates within purine metabolism; AMP biosynthesis via salvage pathway; AMP from ADP: step 1/1. In terms of biological role, catalyzes the reversible transfer of the terminal phosphate group between ATP and AMP. Plays an important role in cellular energy homeostasis and in adenine nucleotide metabolism. In Synechococcus sp. (strain WH7803), this protein is Adenylate kinase.